Consider the following 144-residue polypeptide: Transcriptional regulator MraZ (144 aa).

SpoVT-AbrB domains follow at residues 5-47 (TYTP…PRAE) and 77-120 (TDEQ…DAQA).

Belongs to the MraZ family. In terms of assembly, forms oligomers.

The protein resides in the cytoplasm. It is found in the nucleoid. In Mycolicibacterium gilvum (strain PYR-GCK) (Mycobacterium gilvum (strain PYR-GCK)), this protein is Transcriptional regulator MraZ.